A 93-amino-acid polypeptide reads, in one-letter code: MPRSLKKGPFIDDHLLKKVETQNDKGTKNVIKTWSRRSTIIPEMLGHTIAVHDGRKHVPVFVTEAMVGHKLGEFALTRTFKGHEKDDRKSRRR.

The protein belongs to the universal ribosomal protein uS19 family.

Its function is as follows. Protein S19 forms a complex with S13 that binds strongly to the 16S ribosomal RNA. The protein is Small ribosomal subunit protein uS19 of Salinispora tropica (strain ATCC BAA-916 / DSM 44818 / JCM 13857 / NBRC 105044 / CNB-440).